Here is a 189-residue protein sequence, read N- to C-terminus: GTP cyclohydrolase 1 (189 aa).

Zn(2+) contacts are provided by Cys78, His81, and Cys150.

It belongs to the GTP cyclohydrolase I family. As to quaternary structure, homomer.

The catalysed reaction is GTP + H2O = 7,8-dihydroneopterin 3'-triphosphate + formate + H(+). It functions in the pathway cofactor biosynthesis; 7,8-dihydroneopterin triphosphate biosynthesis; 7,8-dihydroneopterin triphosphate from GTP: step 1/1. In Bacillus cytotoxicus (strain DSM 22905 / CIP 110041 / 391-98 / NVH 391-98), this protein is GTP cyclohydrolase 1.